Consider the following 102-residue polypeptide: RNA-binding protein Hfq (102 aa).

One can recognise a Sm domain in the interval 9–68 (DPFLNALRRERVPVSIYLVNGIKLQGQIESFDQFVILLKNTVSQMVYKHAISTVVPSRPV). The disordered stretch occupies residues 63-102 (VPSRPVSHHSNNAGGSTSSNYHHGSSAQNTSAQQDSEENE). The span at 70–96 (HHSNNAGGSTSSNYHHGSSAQNTSAQQ) shows a compositional bias: polar residues.

The protein belongs to the Hfq family. In terms of assembly, homohexamer.

In terms of biological role, RNA chaperone that binds small regulatory RNA (sRNAs) and mRNAs to facilitate mRNA translational regulation in response to envelope stress, environmental stress and changes in metabolite concentrations. Also binds with high specificity to tRNAs. The chain is RNA-binding protein Hfq from Escherichia coli O17:K52:H18 (strain UMN026 / ExPEC).